Here is a 2188-residue protein sequence, read N- to C-terminus: Genome polyprotein (2188 aa).

Positions 772–774 (RGD) match the Cell attachment site motif. One can recognise an LRAT domain in the interval 795–889 (LAYLDRGFYK…DIFGTHTLSQ (95 aa)). His805 acts as the For protein 2A H-NC in catalysis. Cys874 (for protein 2A H-NC; Acyl-thioester intermediate) is an active-site residue. The SF3 helicase domain maps to 1165-1326 (FQELARIPNR…KAYSKSGKLN (162 aa)). 1193–1200 (GEPGQGKS) provides a ligand contact to ATP. Tyr1502 carries the O-(5'-phospho-RNA)-tyrosine modification. Residues 1526–1716 (APYDGQLEHI…IPFNFLKNDM (191 aa)) enclose the Peptidase C3 domain. Active-site for protease 3C activity residues include His1566, Asp1604, and Cys1678. Cys1905 (acyl-thioester intermediate) is an active-site residue. Residues 1953-2067 (DYNYEMDYSQ…SLDREIEPER (115 aa)) enclose the RdRp catalytic domain. 2 residues coordinate Mg(2+): Asp1959 and Asp2053.

It belongs to the picornaviruses polyprotein family. As to quaternary structure, interacts with capsid protein VP1 and capsid protein VP3 to form heterotrimeric protomers. Five protomers subsequently associate to form pentamers which serve as building blocks for the capsid. In terms of assembly, interacts with capsid protein VP0, and capsid protein VP3 to form heterotrimeric protomers. Five protomers subsequently associate to form pentamers which serve as building blocks for the capsid. Interacts with capsid protein VP0 and capsid protein VP1 to form heterotrimeric protomers. Five protomers subsequently associate to form pentamers which serve as building blocks for the capsid. As to quaternary structure, homohexamer; forms a hexameric ring structure with 6-fold symmetry characteristic of AAA+ ATPases. In terms of assembly, homodimer. Interacts with host ACBD3. Interacts with RNA-directed RNA polymerase. As to quaternary structure, interacts with Viral protein genome-linked. Mg(2+) is required as a cofactor. VPg is uridylylated by the polymerase and is covalently linked to the 5'-end of genomic RNA. This uridylylated form acts as a nucleotide-peptide primer for the polymerase. Post-translationally, specific enzymatic cleavages yield mature proteins. All cleavages are catalyzed by P3C.

It is found in the virion. The protein resides in the host cytoplasm. Its subcellular location is the host nucleus. The protein localises to the host nucleolus. It localises to the host cytoplasmic vesicle membrane. It catalyses the reaction RNA(n) + a ribonucleoside 5'-triphosphate = RNA(n+1) + diphosphate. The catalysed reaction is a ribonucleoside 5'-triphosphate + H2O = a ribonucleoside 5'-diphosphate + phosphate + H(+). It carries out the reaction Selective cleavage of Gln-|-Gly bond in the poliovirus polyprotein. In other picornavirus reactions Glu may be substituted for Gln, and Ser or Thr for Gly.. Functionally, forms an icosahedral capsid of pseudo T=3 symmetry together with capsid proteins VP1 and VP3. The capsid is 300 Angstroms in diameter, composed of 60 copies of each capsid protein and enclosing the viral positive strand RNA genome. Capsid proteins interact with host alpha-V/beta-3 integrin heterodimer to provide virion attachment target cell. This attachment induces virion internalization predominantly through clathrin-mediated endocytosis. Binds packaging signals present in the viral RNA. Forms an icosahedral capsid of pseudo T=3 symmetry together with capsid proteins VP0 and VP1. The capsid is 300 Angstroms in diameter, composed of 60 copies of each capsid protein and enclosing the viral positive strand RNA genome. Capsid proteins interact with host alpha-V/beta-3 integrin heterodimer to provide virion attachment target cell. This attachment induces virion internalization predominantly through clathrin-mediated endocytosis. Binds packaging signals present in the viral RNA. In terms of biological role, forms an icosahedral capsid of pseudo T=3 symmetry together with capsid proteins VP0 and VP3. The capsid is 300 Angstroms in diameter, composed of 60 copies of each capsid protein and enclosing the viral positive strand RNA genome. Capsid proteins interact with host alpha-V/beta-3 integrin heterodimer to provide virion attachment target cell. This attachment induces virion internalization predominantly through clathrin-mediated endocytosis. Binds packaging signals present in the viral RNA. Its function is as follows. Is not a protease. Functionally, plays an essential role in the virus replication cycle by acting as a viroporin. Creates a pore in the host endoplasmic reticulum and as a consequence releases Ca2+ in the cytoplasm of infected cell. In turn, high levels of cytoplasmic calcium may trigger membrane trafficking and transport of viral ER-associated proteins to viroplasms, sites of viral genome replication. Induces and associates with structural rearrangements of intracellular membranes. Displays RNA-binding, nucleotide binding and NTPase activities. May play a role in virion morphogenesis and viral RNA encapsidation by interacting with the capsid protein VP3. In terms of biological role, localizes the viral replication complex to the surface of membranous vesicles. It inhibits host cell endoplasmic reticulum-to-Golgi apparatus transport and causes the disassembly of the Golgi complex, possibly through GBF1 interaction. This would result in depletion of MHC, trail receptors and IFN receptors at the host cell surface. Plays an essential role in viral RNA replication by recruiting ACBD3 and PI4KB at the viral replication sites, thereby allowing the formation of the rearranged membranous structures where viral replication takes place. Its function is as follows. Acts as a primer for viral RNA replication and remains covalently bound to viral genomic RNA. VPg is uridylylated prior to priming replication into VPg-pUpU. The VPg-pUpU is then used as primer on the genomic RNA poly(A) by the RNA-dependent RNA polymerase to replicate the viral genome. Following genome release from the infecting virion in the cytoplasm, the VPg-RNA linkage is probably removed by host TDP2. During the late stage of the replication cycle, host TDP2 is excluded from sites of viral RNA synthesis and encapsidation, allowing for the generation of progeny virions. Functionally, cysteine protease that generates mature viral proteins from the precursor polyprotein. In addition to its proteolytic activity, it binds to viral RNA, and thus influences viral genome replication. RNA and substrate bind cooperatively to the protease. Replicates the viral genomic RNA on the surface of intracellular membranes. Covalently attaches UMP to a tyrosine of VPg, which is used to prime RNA synthesis. The positive stranded RNA genome is first replicated at virus induced membranous vesicles, creating a dsRNA genomic replication form. This dsRNA is then used as template to synthesize positive stranded RNA genomes. ss(+)RNA genomes are either translated, replicated or encapsidated. The polypeptide is Genome polyprotein (Human parechovirus 5 (strain CT86-6760) (HPeV-5)).